The primary structure comprises 220 residues: 3-dehydroquinate dehydratase (220 aa).

3-dehydroquinate is bound by residues serine 8, glutamate 30–arginine 32, and arginine 63. Histidine 114 serves as the catalytic Proton donor/acceptor. Lysine 140 (schiff-base intermediate with substrate) is an active-site residue. 3-dehydroquinate-binding residues include arginine 174 and glutamine 197.

Belongs to the type-I 3-dehydroquinase family. In terms of assembly, homodimer.

The enzyme catalyses 3-dehydroquinate = 3-dehydroshikimate + H2O. It functions in the pathway metabolic intermediate biosynthesis; chorismate biosynthesis; chorismate from D-erythrose 4-phosphate and phosphoenolpyruvate: step 3/7. Its function is as follows. Involved in the third step of the chorismate pathway, which leads to the biosynthesis of aromatic amino acids. Catalyzes the cis-dehydration of 3-dehydroquinate (DHQ) and introduces the first double bond of the aromatic ring to yield 3-dehydroshikimate. In Saccharolobus solfataricus (strain ATCC 35092 / DSM 1617 / JCM 11322 / P2) (Sulfolobus solfataricus), this protein is 3-dehydroquinate dehydratase.